Consider the following 281-residue polypeptide: Pantothenate synthetase (281 aa).

30-37 is an ATP binding site; the sequence is MGNLHQGH. Catalysis depends on His37, which acts as the Proton donor. (R)-pantoate is bound at residue Gln61. Gln61 is a beta-alanine binding site. 149-152 contributes to the ATP binding site; that stretch reads GNKD. (R)-pantoate is bound at residue Gln155. Residues Ile178 and 186 to 189 contribute to the ATP site; that span reads MSSR.

Belongs to the pantothenate synthetase family. As to quaternary structure, homodimer.

It is found in the cytoplasm. The enzyme catalyses (R)-pantoate + beta-alanine + ATP = (R)-pantothenate + AMP + diphosphate + H(+). It participates in cofactor biosynthesis; (R)-pantothenate biosynthesis; (R)-pantothenate from (R)-pantoate and beta-alanine: step 1/1. In terms of biological role, catalyzes the condensation of pantoate with beta-alanine in an ATP-dependent reaction via a pantoyl-adenylate intermediate. This is Pantothenate synthetase from Shewanella sp. (strain MR-7).